Consider the following 362-residue polypeptide: Phosphoserine aminotransferase (362 aa).

Residues S9 and R42 each contribute to the L-glutamate site. Residues 76–77, W102, T153, D174, and Q197 each bind pyridoxal 5'-phosphate; that span reads GR. K198 carries the post-translational modification N6-(pyridoxal phosphate)lysine. 239-240 serves as a coordination point for pyridoxal 5'-phosphate; it reads NT.

It belongs to the class-V pyridoxal-phosphate-dependent aminotransferase family. SerC subfamily. In terms of assembly, homodimer. Pyridoxal 5'-phosphate serves as cofactor.

Its subcellular location is the cytoplasm. The catalysed reaction is O-phospho-L-serine + 2-oxoglutarate = 3-phosphooxypyruvate + L-glutamate. The enzyme catalyses 4-(phosphooxy)-L-threonine + 2-oxoglutarate = (R)-3-hydroxy-2-oxo-4-phosphooxybutanoate + L-glutamate. Its pathway is amino-acid biosynthesis; L-serine biosynthesis; L-serine from 3-phospho-D-glycerate: step 2/3. The protein operates within cofactor biosynthesis; pyridoxine 5'-phosphate biosynthesis; pyridoxine 5'-phosphate from D-erythrose 4-phosphate: step 3/5. In terms of biological role, catalyzes the reversible conversion of 3-phosphohydroxypyruvate to phosphoserine and of 3-hydroxy-2-oxo-4-phosphonooxybutanoate to phosphohydroxythreonine. The chain is Phosphoserine aminotransferase from Salmonella newport (strain SL254).